The chain runs to 539 residues: Chaperonin GroEL (539 aa).

ATP contacts are provided by residues 29–32, 86–90, G413, 476–478, and D492; these read TLGP, DGTTT, and NAA.

It belongs to the chaperonin (HSP60) family. Forms a cylinder of 14 subunits composed of two heptameric rings stacked back-to-back. Interacts with the co-chaperonin GroES.

The protein localises to the cytoplasm. It catalyses the reaction ATP + H2O + a folded polypeptide = ADP + phosphate + an unfolded polypeptide.. In terms of biological role, together with its co-chaperonin GroES, plays an essential role in assisting protein folding. The GroEL-GroES system forms a nano-cage that allows encapsulation of the non-native substrate proteins and provides a physical environment optimized to promote and accelerate protein folding. The chain is Chaperonin GroEL from Macrococcus caseolyticus (strain JCSC5402) (Macrococcoides caseolyticum).